The chain runs to 314 residues: MANYQNLLVVIDPSQDDQPALRRAVYIVQRNGGRIKAFLPIYDLSYEMTTLLSPEEGSTMRKGVTSQRTAWLKQQAYYYLEAGIDIEIKVVWHNRPYEAIIQEVITGNHDLLLKMTHKHDKLGSLIFTPLDWQLLRKCPCPVWMVKDQIWPDQGSVVVAVNLSNEESYHHELNLKLVKETQELANQVMKNPEIHLVSAYPVAPLNIAIELPDFNPSVYNHALRGQHLIAMKELRQTFCIDEKYTHIHEGLPESVIPQMCDEMNAGIIVLGILGRTGLSAAFLGNTAEHVIDHLKCDILTIKPDGFECPIKAAKE.

It belongs to the universal stress protein A family.

It localises to the cytoplasm. In terms of biological role, required for resistance to DNA-damaging agents. This chain is Universal stress protein E (uspE), found in Photorhabdus laumondii subsp. laumondii (strain DSM 15139 / CIP 105565 / TT01) (Photorhabdus luminescens subsp. laumondii).